The chain runs to 141 residues: Large ribosomal subunit protein uL13 (141 aa).

Belongs to the universal ribosomal protein uL13 family. As to quaternary structure, part of the 50S ribosomal subunit.

In terms of biological role, this protein is one of the early assembly proteins of the 50S ribosomal subunit, although it is not seen to bind rRNA by itself. It is important during the early stages of 50S assembly. The polypeptide is Large ribosomal subunit protein uL13 (Helicobacter pylori (strain G27)).